The sequence spans 2737 residues: Non-reducing polyketide synthase ATEG_07661 (2737 aa).

The interval 75-245 (SRSLAELDSW…VRYDQTRATV (171 aa)) is N-terminal acylcarrier protein transacylase domain (SAT). Cys154 functions as the Nucleophile; for transacylase activity in the catalytic mechanism. His276 acts as the Proton donor/acceptor; for transacylase activity in catalysis. Residues 427–854 (NEAIAIVGMS…GSNASMIITE (428 aa)) form the Ketosynthase family 3 (KS3) domain. Catalysis depends on for beta-ketoacyl synthase activity residues Cys603, His738, and His777. The interval 969–1260 (FGGQVSRFVG…IMASRAIAQS (292 aa)) is malonyl-CoA:ACP transacylase (MAT). The N-terminal hotdog fold stretch occupies residues 1368-1503 (LQSLWNFVEF…ASVEMRAPTD (136 aa)). Residues 1368–1683 (LQSLWNFVEF…YGRVAKASMS (316 aa)) enclose the PKS/mFAS DH domain. Residues 1399–1681 (FVLSHVIAQT…VQYGRVAKAS (283 aa)) form a product template (PT) domain region. The active-site Proton acceptor; for dehydratase activity is His1403. The interval 1535–1683 (VEVLQGRNVY…YGRVAKASMS (149 aa)) is C-terminal hotdog fold. The Proton donor; for dehydratase activity role is filled by Asp1592. Residues 1724 to 1747 (SRTTKKKAKASKSKSSVKKDKAPS) are disordered. Over residues 1725-1739 (RTTKKKAKASKSKSS) the composition is skewed to basic residues. A Carrier domain is found at 1750–1824 (RDITDEVRNL…KFVACVSNAL (75 aa)). Ser1784 bears the O-(pantetheine 4'-phosphoryl)serine mark. Residues 1827–1876 (PNQGQSSIDEDDEDDEHSEDSSNESSSAASDEDASSGLESPDTGILTPED) form a disordered region. Positions 1834–1848 (IDEDDEDDEHSEDSS) are enriched in acidic residues. Positions 1849–1866 (NESSSAASDEDASSGLES) are enriched in low complexity. A methyltransferase domain region spans residues 2094-2270 (ADRIQSSSGS…GFGHVDWTDG (177 aa)). The segment at 2362-2665 (VVLVTGATGS…IPFKDWISRV (304 aa)) is NADPH-binding domain.

The protein operates within secondary metabolite biosynthesis. Its function is as follows. Non-reducing polyketide synthase; part of the cluster B that mediates the biosynthesis of azasperpyranones, members of the azaphilone family that exhibit anti-cancer activities. Azasperpyranones are synthesized by 2 clusters, A and B. Cluster A is responsible for the production of the polyhydric phenol moiety while the azaphilonoid scaffold is produced by the cluster B. The non-reducing polyketide synthase ATEG_03629 produces 5-methyl orsellinic acid, which is then reduced to 5-methyl orsellinic aldehyde by the NRPS-like protein ATEG_03630. 5-methyl orsellinic aldehyde is then first hydroxylated by the FAD-dependent monooxygenase ATEG_03635 and subsequently hydroxylated by the cytochrome P450 monooxygenase ATEG_03631 to produce the unstable polyhydric phenol precursor of azasperpyranones. On the other hand, the polyketide synthase ATEG_07659 is responsible for producing the 3,5-dimethyloctadienone moiety from acetyl-CoA, three malonyl-CoA, and two S-adenosyl methionines (SAM). The 3,5-dimethyloctadienone moiety is then loaded onto the SAT domain of ATEG_07661 and extended with four malonyl-CoA and one SAM, which leads to the formation of 2,4-dihydroxy-6-(5,7-dimethyl-2-oxo-trans-3-trans-5-nonadienyl)-3-methylbenzaldehyde (compound 8) after reductive release and aldol condensation. The FAD-dependent monooxygenase ATEG_07662 is the next enzyme in the biosynthesis sequence and hydroxylates the side chain at the benzylic position of compound 8. In Aspergillus nidulans, afoF, the ortholog of the FAD-dependent oxygenase ATEG_07660, is the key enzyme for the biosynthesis of asperfuranone by catalyzing the hydroxylation at C-8 of to prevent the formation of a six-membered ring hemiacetal intermediate and thus facilitating the formation of a five-membered ring to produce asperfuranone. In Aspergillus terreus, ATEG_07660 is probably not functional, which leads to the formation of the six-membered ring hemiacetal intermediate presperpyranone instead of asperfuranone. Finally, ATEG_03636 is involved in the condensation of the polyhydric phenol moiety produced by cluster A and the perasperpyranone precursor produced by cluster B, to yield azasperpyranone A. Further modifications of azasperpyranone A result in the production of derivatives, including azasperpyranone B to F. The protein is Non-reducing polyketide synthase ATEG_07661 of Aspergillus terreus (strain NIH 2624 / FGSC A1156).